The chain runs to 101 residues: MSRRCELTAKGAQVGHKVSHSNIKTKRRFLPNLVNITFISDALGRQVRLRVSTNALKSVDHRGGLDGFLLKAKDAELSPKAVDIKRQIEKKKLTAELAAQA.

The protein belongs to the bacterial ribosomal protein bL28 family.

In Rhodopseudomonas palustris (strain BisA53), this protein is Large ribosomal subunit protein bL28.